The following is a 427-amino-acid chain: Riboflavin transporter rft-1 (427 aa).

Residues 1–2 are Cytoplasmic-facing; sequence MK. A helical transmembrane segment spans residues 3–23; the sequence is TFLFTFCLVAIFGSSSWIGTN. The Extracellular portion of the chain corresponds to 24 to 42; sequence SVWMELSLLTAKLPEGWNL. A helical transmembrane segment spans residues 43 to 63; that stretch reads PSYLSAIVQIACLGPLIYSII. Over 64–73 the chain is Cytoplasmic; that stretch reads HKGIKMTIPT. A helical transmembrane segment spans residues 74 to 94; sequence VPLIFIFMVLACICQLGLCFF. The Extracellular segment spans residues 95-111; that stretch reads WDDTGYIFGAIRSWPLY. A helical membrane pass occupies residues 112-132; the sequence is LLLFGLAIVDAISSVLFLPFM. Topologically, residues 133–139 are cytoplasmic; the sequence is AQFHPSF. A helical transmembrane segment spans residues 140-160; the sequence is LNAYFVGMGLSALIPSLLSLI. Over 161-184 the chain is Extracellular; the sequence is QGTSNYWCDDNKTPHYYPPRFSVS. A helical transmembrane segment spans residues 185–205; the sequence is MFFLINFFFTCAAVAAFLVLY. Over 206 to 261 the chain is Cytoplasmic; sequence KIGAHKNSSQVEPEPKHSIQIIQGDSTTDVNEVNTESSFQETSSIPDSSSATGARL. A helical membrane pass occupies residues 262–282; the sequence is AFLLLTTALVNAQMNGIVTSV. The Extracellular portion of the chain corresponds to 283–297; that stretch reads QSYATLVYSQNTYHY. The chain crosses the membrane as a helical span at residues 298–318; the sequence is AVTLSNVISPLASYLQFFVKI. Topologically, residues 319–322 are cytoplasmic; it reads RSLP. The chain crosses the membrane as a helical span at residues 323 to 343; that stretch reads ILAFLTLCSSLTTAVIIYLAA. Over 344-353 the chain is Extracellular; that stretch reads LSPNWIFNSE. A helical membrane pass occupies residues 354–374; sequence TAGTIISIASSLIAAGLHSYL. At 375–391 the chain is on the cytoplasmic side; the sequence is RVMFAALLREGNQKESR. Residues 392–412 form a helical membrane-spanning segment; sequence LFWCGAFIQIGSFTGSAIMFP. Topologically, residues 413-427 are extracellular; it reads LVNVWKLFHSAPSCR.

It belongs to the riboflavin transporter family. As to expression, expressed in intestine.

The protein resides in the cell membrane. It catalyses the reaction riboflavin(in) = riboflavin(out). With respect to regulation, activity is strongly inhibited by riboflavin analogs, such as lumiflavin and lumichrome. In terms of biological role, riboflavin transporter. Riboflavin transport is Na(+)-independent but pH-sensitive. The sequence is that of Riboflavin transporter rft-1 from Caenorhabditis elegans.